The primary structure comprises 359 residues: Peptide chain release factor 1 (359 aa).

At Gln236 the chain carries N5-methylglutamine.

This sequence belongs to the prokaryotic/mitochondrial release factor family. Methylated by PrmC. Methylation increases the termination efficiency of RF1.

The protein resides in the cytoplasm. Peptide chain release factor 1 directs the termination of translation in response to the peptide chain termination codons UAG and UAA. In Streptococcus agalactiae, this protein is Peptide chain release factor 1.